We begin with the raw amino-acid sequence, 382 residues long: 3-dehydroquinate synthase (382 aa).

NAD(+) contacts are provided by residues 81–86 (EGEGSK), 115–119 (GVVGD), 139–140 (TS), Lys152, and Lys161. Residues Glu194, His256, and His274 each contribute to the Zn(2+) site.

This sequence belongs to the sugar phosphate cyclases superfamily. Dehydroquinate synthase family. It depends on Co(2+) as a cofactor. Zn(2+) serves as cofactor. The cofactor is NAD(+).

It localises to the cytoplasm. The catalysed reaction is 7-phospho-2-dehydro-3-deoxy-D-arabino-heptonate = 3-dehydroquinate + phosphate. The protein operates within metabolic intermediate biosynthesis; chorismate biosynthesis; chorismate from D-erythrose 4-phosphate and phosphoenolpyruvate: step 2/7. Functionally, catalyzes the conversion of 3-deoxy-D-arabino-heptulosonate 7-phosphate (DAHP) to dehydroquinate (DHQ). This Bradyrhizobium sp. (strain BTAi1 / ATCC BAA-1182) protein is 3-dehydroquinate synthase.